Reading from the N-terminus, the 273-residue chain is Large ribosomal subunit protein uL2 (273 aa).

Residues W213–N261 are disordered.

Belongs to the universal ribosomal protein uL2 family. Part of the 50S ribosomal subunit. Forms a bridge to the 30S subunit in the 70S ribosome.

Its function is as follows. One of the primary rRNA binding proteins. Required for association of the 30S and 50S subunits to form the 70S ribosome, for tRNA binding and peptide bond formation. It has been suggested to have peptidyltransferase activity; this is somewhat controversial. Makes several contacts with the 16S rRNA in the 70S ribosome. This is Large ribosomal subunit protein uL2 from Syntrophotalea carbinolica (strain DSM 2380 / NBRC 103641 / GraBd1) (Pelobacter carbinolicus).